The following is a 135-amino-acid chain: Small ribosomal subunit protein uS12 (135 aa).

Residues 1 to 20 (MPTINQLVRKGRHSKVTKSK) form a disordered region. Basic residues predominate over residues 9 to 18 (RKGRHSKVTK). Asp102 bears the 3-methylthioaspartic acid mark.

The protein belongs to the universal ribosomal protein uS12 family. In terms of assembly, part of the 30S ribosomal subunit. Contacts proteins S8 and S17. May interact with IF1 in the 30S initiation complex.

Its function is as follows. With S4 and S5 plays an important role in translational accuracy. In terms of biological role, interacts with and stabilizes bases of the 16S rRNA that are involved in tRNA selection in the A site and with the mRNA backbone. Located at the interface of the 30S and 50S subunits, it traverses the body of the 30S subunit contacting proteins on the other side and probably holding the rRNA structure together. The combined cluster of proteins S8, S12 and S17 appears to hold together the shoulder and platform of the 30S subunit. The protein is Small ribosomal subunit protein uS12 of Lactobacillus helveticus (strain DPC 4571).